Reading from the N-terminus, the 337-residue chain is Ycf66-like protein (337 aa).

The segment at T111–Y337 is disordered. Acidic residues predominate over residues A113–E123. Composition is skewed to basic and acidic residues over residues R133–R143 and F253–E269. Over residues Q304–S316 the composition is skewed to polar residues.

Belongs to the ycf66 family.

The sequence is that of Ycf66-like protein from Synechocystis sp. (strain ATCC 27184 / PCC 6803 / Kazusa).